Consider the following 865-residue polypeptide: Bifunctional uridylyltransferase/uridylyl-removing enzyme (865 aa).

The uridylyltransferase stretch occupies residues 1–318 (MPHVDLNPLK…FPRPDSDARL (318 aa)). The tract at residues 319–675 (IDDDFRNLRE…VRPTEHGEGL (357 aa)) is uridylyl-removing. Residues 437–559 (VDQHTLAVVR…VGDERRLAAL (123 aa)) enclose the HD domain. 2 ACT domains span residues 676 to 762 (QVMV…RLPH) and 789 to 865 (RLSV…QQAA). The disordered stretch occupies residues 747-767 (DPHAARHAHAPRRLPHSHARR). The span at 751-767 (ARHAHAPRRLPHSHARR) shows a compositional bias: basic residues.

It belongs to the GlnD family. Mg(2+) serves as cofactor.

It catalyses the reaction [protein-PII]-L-tyrosine + UTP = [protein-PII]-uridylyl-L-tyrosine + diphosphate. The enzyme catalyses [protein-PII]-uridylyl-L-tyrosine + H2O = [protein-PII]-L-tyrosine + UMP + H(+). Its activity is regulated as follows. Uridylyltransferase (UTase) activity is inhibited by glutamine, while glutamine activates uridylyl-removing (UR) activity. Modifies, by uridylylation and deuridylylation, the PII regulatory proteins (GlnB and homologs), in response to the nitrogen status of the cell that GlnD senses through the glutamine level. Under low glutamine levels, catalyzes the conversion of the PII proteins and UTP to PII-UMP and PPi, while under higher glutamine levels, GlnD hydrolyzes PII-UMP to PII and UMP (deuridylylation). Thus, controls uridylylation state and activity of the PII proteins, and plays an important role in the regulation of nitrogen assimilation and metabolism. This Bordetella bronchiseptica (strain ATCC BAA-588 / NCTC 13252 / RB50) (Alcaligenes bronchisepticus) protein is Bifunctional uridylyltransferase/uridylyl-removing enzyme.